We begin with the raw amino-acid sequence, 313 residues long: Ribosomal protein L11 methyltransferase (313 aa).

Positions 154, 179, 201, and 242 each coordinate S-adenosyl-L-methionine.

It belongs to the methyltransferase superfamily. PrmA family.

The protein localises to the cytoplasm. The catalysed reaction is L-lysyl-[protein] + 3 S-adenosyl-L-methionine = N(6),N(6),N(6)-trimethyl-L-lysyl-[protein] + 3 S-adenosyl-L-homocysteine + 3 H(+). Methylates ribosomal protein L11. The protein is Ribosomal protein L11 methyltransferase of Xanthomonas oryzae pv. oryzae (strain MAFF 311018).